Reading from the N-terminus, the 356-residue chain is Tyrosine recombinase XerS (356 aa).

The Core-binding (CB) domain occupies 16–121 (IMPWYVLDYY…ALSSLYKYLT (106 aa)). The Tyr recombinase domain occupies 169–354 (AFLDYVDKEY…VNDEQKTALD (186 aa)). Catalysis depends on residues Arg210, Lys234, His306, Arg309, and His332. Tyr341 acts as the O-(3'-phospho-DNA)-tyrosine intermediate in catalysis.

Belongs to the 'phage' integrase family. XerS subfamily.

Its subcellular location is the cytoplasm. Its activity is regulated as follows. FtsK is required for recombination. Site-specific tyrosine recombinase, which acts by catalyzing the cutting and rejoining of the recombining DNA molecules. Essential to convert dimers of the bacterial chromosome into monomers to permit their segregation at cell division. The chain is Tyrosine recombinase XerS from Streptococcus pyogenes serotype M12 (strain MGAS9429).